The sequence spans 152 residues: Nucleoside diphosphate kinase B (152 aa).

The segment at Met1 to Lys66 is interaction with AKAP13. ATP is bound by residues Lys12, Phe60, Arg88, Thr94, Arg105, and Asn115. His118 serves as the catalytic Pros-phosphohistidine intermediate.

The protein belongs to the NDK family. Hexamer of two different chains: An and B (A6, A5B, A4B2, A3B3, A2B4, AB5, B6). Interacts with CAPN8. Interacts with AKAP13. Interacts with ITGB1BP1 (via C-terminal domain region). Interacts with BCL2L10. The cofactor is Mg(2+). Post-translationally, the N-terminus is blocked.

Its subcellular location is the cytoplasm. It is found in the cell projection. The protein resides in the lamellipodium. The protein localises to the ruffle. It localises to the nucleus. It catalyses the reaction a 2'-deoxyribonucleoside 5'-diphosphate + ATP = a 2'-deoxyribonucleoside 5'-triphosphate + ADP. It carries out the reaction a ribonucleoside 5'-diphosphate + ATP = a ribonucleoside 5'-triphosphate + ADP. The catalysed reaction is ATP + protein L-histidine = ADP + protein N-phospho-L-histidine.. Major role in the synthesis of nucleoside triphosphates other than ATP. The ATP gamma phosphate is transferred to the NDP beta phosphate via a ping-pong mechanism, using a phosphorylated active-site intermediate. Negatively regulates Rho activity by interacting with AKAP13/LBC. Acts as a transcriptional activator of the MYC gene; binds DNA non-specifically. Binds to both single-stranded guanine- and cytosine-rich strands within the nuclease hypersensitive element (NHE) III(1) region of the MYC gene promoter. Does not bind to duplex NHE III(1). Has G-quadruplex (G4) DNA-binding activity, which is independent of its nucleotide-binding and kinase activity. Binds both folded and unfolded G4 with similar low nanomolar affinities. Stabilizes folded G4s regardless of whether they are prefolded or not. Exhibits histidine protein kinase activity. The chain is Nucleoside diphosphate kinase B (Nme2) from Rattus norvegicus (Rat).